A 250-amino-acid chain; its full sequence is MTTMADGLEAQDSSKSAFMEFGQQQSHSQQSSPVMAAGHYPSLHCLHSGSHHHPQHQHDTNYSGSNSYSRSLAAYPYMSHSQHSPYLQSCNSNTTTQSRAEEPDQQKTTVIENGEIRFNGKGKKIRKPRTIYSSLQLQALNHRFQQTQYLALPERAELAASLGVTQTQVKIWFQNKRSKYKKLIKQGNNPLEIDQLAGTVALSPRSPAIPPVWDVSASKGVSMAPNSYMPGYSHWYSSPHQDTMQRSQMM.

Disordered stretches follow at residues 40-66 and 84-106; these read YPSL…SGSN and SPYL…PDQQ. Polar residues predominate over residues 84–98; it reads SPYLQSCNSNTTTQS. The segment at residues 125–184 is a DNA-binding region (homeobox); sequence IRKPRTIYSSLQLQALNHRFQQTQYLALPERAELAASLGVTQTQVKIWFQNKRSKYKKLI.

Belongs to the distal-less homeobox family.

The protein resides in the nucleus. The chain is Homeobox protein DLL-1 (dll1) from Xenopus laevis (African clawed frog).